The chain runs to 170 residues: MQLQDSIVNIISTYDNAGKYLDSNAITNIKKYFDTADTRLGIVKIINANSSLIIQQASSQLFERNPELIRPSGNAYTTRRYAACLRDIDYYLRYASYSIVANDTSVLSSRVLAGLKDTYNSLGVPLASIVTLLELLKELIKEKTKNINDAHKYIDEPFLYMMKILCENDV.

Asn74 carries the N4-methylasparagine modification. Cys84 contacts (2R,3E)-phycocyanobilin.

This sequence belongs to the phycobiliprotein family. In terms of assembly, heterodimer of an alpha and a beta chain. Post-translationally, contains one covalently linked bilin chromophore.

Its subcellular location is the plastid. The protein localises to the chloroplast thylakoid membrane. Functionally, light-harvesting photosynthetic bile pigment-protein from the phycobiliprotein complex. Allophycocyanin has a maximum absorption at approximately 650 nanometers. The chain is Allophycocyanin subunit beta-18 (apcF) from Cyanidium caldarium (Red alga).